The chain runs to 191 residues: Programmed cell death protein 6 (191 aa).

The residue at position 2 (alanine 2) is an N-acetylalanine. 5 consecutive EF-hand domains span residues 23–58 (PDQSFLWNVFQRVDKDRSGVISDNELQQALSNGTWT), 59–89 (PFNPVTVRSIISMFDRENKAGVNFSEFTGVW), 90–125 (KYITDWQNVFRTYDRDNSGMIDKHELKQALSGFGYR), 126–161 (LSDQFHDILIRKFDRQGRGQIAFDDFIQGCIVLQRL), and 162–191 (TDIFRRYDTDQDGWIQVSYEQYLSMVFSIV). Ca(2+) contacts are provided by aspartate 36, aspartate 38, serine 40, valine 42, and glutamate 47. Residues aspartate 103, aspartate 105, serine 107, methionine 109, and glutamate 114 each coordinate Ca(2+). Mg(2+) is bound by residues aspartate 169, aspartate 171, aspartate 173, and tryptophan 175.

As to quaternary structure, homodimer and heterodimer; heterodimerizes (via the EF-hand 5) with PEF1. Isoform 1 and isoform 2 self-associate; probably forming homodimers. Interacts with CPNE4 (via VWFA domain). Interacts with PDCD6IP; the interaction is calcium-dependent. Interacts with RBM22. Interacts with PLSCR4. Interacts with ANXA7 and TSG101. Interacts with DAPK1. Interacts with SEC31A; the interaction is calcium-dependent and promotes monoubiquitination of SEC31A. Interacts with ANXA11 (via N-terminus); the interaction is calcium-dependent. Interacts with PLSCR3 (via N-terminus); the interaction is calcium-dependent. Interacts with MCOLN1; the interaction is calcium-dependent. Interacts with KDR; the interaction is calcium-dependent. Interacts with HEBP2; the interaction is calcium-dependent. Interacts with TFG. Isoform 1: Interacts with SHISA5, leading to stabilize it. Isoform 2: Does not interact with SHISA5. Isoform 2: Does not interact with PDCD6IP, TSG101, ANXA7 and ANXA11.

The protein resides in the endoplasmic reticulum membrane. It localises to the cytoplasmic vesicle. The protein localises to the COPII-coated vesicle membrane. Its subcellular location is the cytoplasm. It is found in the nucleus. The protein resides in the endosome. In terms of biological role, calcium sensor that plays a key role in processes such as endoplasmic reticulum (ER)-Golgi vesicular transport, endosomal biogenesis or membrane repair. Acts as an adapter that bridges unrelated proteins or stabilizes weak protein-protein complexes in response to calcium: calcium-binding triggers exposure of apolar surface, promoting interaction with different sets of proteins thanks to 3 different hydrophobic pockets, leading to translocation to membranes. Involved in ER-Golgi transport. Regulates ER-Golgi transport by promoting the association between PDCD6IP and TSG101, thereby bridging together the ESCRT-III and ESCRT-I complexes. Together with PEF1, acts as a calcium-dependent adapter for the BCR(KLHL12) complex, a complex involved in ER-Golgi transport by regulating the size of COPII coats. In response to cytosolic calcium increase, the heterodimer formed with PEF1 interacts with, and bridges together the BCR(KLHL12) complex and SEC31 (SEC31A or SEC31B), promoting monoubiquitination of SEC31 and subsequent collagen export, which is required for neural crest specification. Involved in the regulation of the distribution and function of MCOLN1 in the endosomal pathway. Promotes localization and polymerization of TFG at endoplasmic reticulum exit site. Required for T-cell receptor-, Fas-, and glucocorticoid-induced apoptosis. May mediate Ca(2+)-regulated signals along the death pathway: interaction with DAPK1 can accelerate apoptotic cell death by increasing caspase-3 activity. Its role in apoptosis may however be indirect, as suggested by knockout experiments. May inhibit KDR/VEGFR2-dependent angiogenesis; the function involves inhibition of VEGF-induced phosphorylation of the Akt signaling pathway. Its function is as follows. Has a lower Ca(2+) affinity than isoform 1. The chain is Programmed cell death protein 6 from Rattus norvegicus (Rat).